The sequence spans 607 residues: Methylmalonate-semialdehyde dehydrogenase [acylating], mitochondrial (607 aa).

Positions 1–69 are disordered; the sequence is MVRVKQKNLE…KLRSSSSTTT (69 aa). The N-terminal 98 residues, 1-98, are a transit peptide targeting the mitochondrion; sequence MVRVKQKNLE…QFLALRSSWL (98 aa). The span at 9 to 30 shows a compositional bias: polar residues; it reads LESYRSNGTYPPTWRNPTTSFA. Positions 42-51 are enriched in basic residues; it reads LKSKTKRRRL. NAD(+)-binding residues include F259, K283, E286, K287, and S336. The active-site Nucleophile is C391. E491 is an NAD(+) binding site.

It belongs to the aldehyde dehydrogenase family.

Its subcellular location is the mitochondrion. The catalysed reaction is 2-methyl-3-oxopropanoate + NAD(+) + CoA + H2O = propanoyl-CoA + hydrogencarbonate + NADH + H(+). In Arabidopsis thaliana (Mouse-ear cress), this protein is Methylmalonate-semialdehyde dehydrogenase [acylating], mitochondrial (ALDH6B2).